A 724-amino-acid polypeptide reads, in one-letter code: Probable ATP-dependent RNA helicase DDX4 (724 aa).

The span at 1–11 shows a compositional bias: acidic residues; sequence MSGQEDWESEI. Disordered stretches follow at residues 1-25 and 37-241; these read MSGQEDWESEIDNPPACVPNLSNSE and SSNN…QGPR. Residues 108–130 show a composition bias toward basic and acidic residues; it reads SNGKQESGDFTNDDNRTIDDNRR. Residues 168–182 show a composition bias toward polar residues; it reads EQSGFTSNDGFNNET. The short motif at 286-314 is the Q motif element; it reads LTFEEANLCDSLAKNVCKSGYVKLTPIQK. One can recognise a Helicase ATP-binding domain in the interval 317 to 500; that stretch reads IPIIVAGRDL…REILKPDYLF (184 aa). An ATP-binding site is contributed by 330–337; the sequence is AQTGSGKT. Residues 444–447 carry the DEAD box motif; that stretch reads DEAD. Residues 512–675 enclose the Helicase C-terminal domain; sequence DVEQMVIEVD…EVPAWLEEVA (164 aa). The segment covering 683–692 has biased composition (polar residues); that stretch reads AYNPRSNKFA. Residues 683 to 724 are disordered; it reads AYNPRSNKFASTDDRKRGDSRGDYSTSGFSPSAAQAEEEDWG. The segment covering 693–704 has biased composition (basic and acidic residues); the sequence is STDDRKRGDSRG. Residues 705 to 715 are compositionally biased toward polar residues; it reads DYSTSGFSPSA.

The protein belongs to the DEAD box helicase family. DDX4/VASA subfamily.

It is found in the cytoplasm. The catalysed reaction is ATP + H2O = ADP + phosphate + H(+). Functionally, probable ATP-dependent RNA helicase required during spermatogenesis to repress transposable elements and preventing their mobilization, which is essential for the germline integrity. Acts via the piRNA metabolic process, which mediates the repression of transposable elements during meiosis by forming complexes composed of piRNAs and Piwi proteins and governs the methylation and subsequent repression of transposons. Involved in the secondary piRNAs metabolic process, the production of piRNAs in fetal male germ cells through a ping-pong amplification cycle. The chain is Probable ATP-dependent RNA helicase DDX4 from Pelophylax lessonae (Pool frog).